The following is a 411-amino-acid chain: Glucose-1-phosphate adenylyltransferase (411 aa).

Alpha-D-glucose 1-phosphate contacts are provided by residues Gly162, 177–178 (EK), and Ser195.

Belongs to the bacterial/plant glucose-1-phosphate adenylyltransferase family. As to quaternary structure, homotetramer.

It carries out the reaction alpha-D-glucose 1-phosphate + ATP + H(+) = ADP-alpha-D-glucose + diphosphate. It functions in the pathway glycan biosynthesis; glycogen biosynthesis. Functionally, involved in the biosynthesis of ADP-glucose, a building block required for the elongation reactions to produce glycogen. Catalyzes the reaction between ATP and alpha-D-glucose 1-phosphate (G1P) to produce pyrophosphate and ADP-Glc. The protein is Glucose-1-phosphate adenylyltransferase of Thermodesulfovibrio yellowstonii (strain ATCC 51303 / DSM 11347 / YP87).